Consider the following 217-residue polypeptide: Uracil-DNA glycosylase (217 aa).

The active-site Proton acceptor is the D62.

This sequence belongs to the uracil-DNA glycosylase (UDG) superfamily. UNG family.

Its subcellular location is the cytoplasm. It carries out the reaction Hydrolyzes single-stranded DNA or mismatched double-stranded DNA and polynucleotides, releasing free uracil.. In terms of biological role, excises uracil residues from the DNA which can arise as a result of misincorporation of dUMP residues by DNA polymerase or due to deamination of cytosine. The protein is Uracil-DNA glycosylase of Streptococcus pneumoniae (strain P1031).